Consider the following 382-residue polypeptide: ATP phosphoribosyltransferase regulatory subunit (382 aa).

This sequence belongs to the class-II aminoacyl-tRNA synthetase family. HisZ subfamily. Heteromultimer composed of HisG and HisZ subunits.

It is found in the cytoplasm. It functions in the pathway amino-acid biosynthesis; L-histidine biosynthesis; L-histidine from 5-phospho-alpha-D-ribose 1-diphosphate: step 1/9. Required for the first step of histidine biosynthesis. May allow the feedback regulation of ATP phosphoribosyltransferase activity by histidine. This Acidovorax sp. (strain JS42) protein is ATP phosphoribosyltransferase regulatory subunit.